The primary structure comprises 358 residues: DNA polymerase IV (358 aa).

Positions Ile4–Gly185 constitute a UmuC domain. Asp8 and Asp103 together coordinate Mg(2+). The active site involves Glu104.

The protein belongs to the DNA polymerase type-Y family. In terms of assembly, monomer. The cofactor is Mg(2+).

Its subcellular location is the cytoplasm. It catalyses the reaction DNA(n) + a 2'-deoxyribonucleoside 5'-triphosphate = DNA(n+1) + diphosphate. Functionally, poorly processive, error-prone DNA polymerase involved in untargeted mutagenesis. Copies undamaged DNA at stalled replication forks, which arise in vivo from mismatched or misaligned primer ends. These misaligned primers can be extended by PolIV. Exhibits no 3'-5' exonuclease (proofreading) activity. May be involved in translesional synthesis, in conjunction with the beta clamp from PolIII. The sequence is that of DNA polymerase IV from Shewanella halifaxensis (strain HAW-EB4).